The chain runs to 597 residues: Elongation factor 4 (597 aa).

One can recognise a tr-type G domain in the interval 2–184; that stretch reads QHIRNFSIIA…SIVARVPPPK (183 aa). GTP-binding positions include 14–19 and 131–134; these read DHGKST and NKMD.

The protein belongs to the TRAFAC class translation factor GTPase superfamily. Classic translation factor GTPase family. LepA subfamily.

Its subcellular location is the cell inner membrane. It catalyses the reaction GTP + H2O = GDP + phosphate + H(+). In terms of biological role, required for accurate and efficient protein synthesis under certain stress conditions. May act as a fidelity factor of the translation reaction, by catalyzing a one-codon backward translocation of tRNAs on improperly translocated ribosomes. Back-translocation proceeds from a post-translocation (POST) complex to a pre-translocation (PRE) complex, thus giving elongation factor G a second chance to translocate the tRNAs correctly. Binds to ribosomes in a GTP-dependent manner. This chain is Elongation factor 4, found in Bordetella bronchiseptica (strain ATCC BAA-588 / NCTC 13252 / RB50) (Alcaligenes bronchisepticus).